We begin with the raw amino-acid sequence, 64 residues long: DNA-binding protein 7a (64 aa).

Belongs to the 7 kDa DNA-binding/endoribonuclease P2 family. As to quaternary structure, monomer.

The protein resides in the cytoplasm. Can constrain negative DNA supercoils. May be involved in maintaining the integrity of the genome at high temperature. This is DNA-binding protein 7a from Saccharolobus islandicus (strain L.D.8.5 / Lassen #2) (Sulfolobus islandicus).